The sequence spans 104 residues: Interferon alpha-inducible protein 27-like protein 1 (104 aa).

The next 3 membrane-spanning stretches (helical) occupy residues 14–34 (VAAV…LSAM), 59–79 (GGGV…AAGL), and 81–101 (VTSK…LGSP).

This sequence belongs to the IFI6/IFI27 family.

The protein resides in the membrane. Functionally, plays a role in the apoptotic process and has a pro-apoptotic activity. This Homo sapiens (Human) protein is Interferon alpha-inducible protein 27-like protein 1.